The sequence spans 311 residues: Protease HtpX homolog 1 (311 aa).

Helical transmembrane passes span 12-32 (IIAL…IINF) and 35-55 (FPVI…WLIS). Histidine 137 provides a ligand contact to Zn(2+). Glutamate 138 is an active-site residue. Zn(2+) is bound at residue histidine 141. The next 2 membrane-spanning stretches (helical) occupy residues 159–179 (ILGF…IFAV) and 184–204 (ILVG…TFFL). Glutamate 216 lines the Zn(2+) pocket.

The protein belongs to the peptidase M48B family. Requires Zn(2+) as cofactor.

Its subcellular location is the cell membrane. This is Protease HtpX homolog 1 from Sulfurisphaera tokodaii (strain DSM 16993 / JCM 10545 / NBRC 100140 / 7) (Sulfolobus tokodaii).